We begin with the raw amino-acid sequence, 398 residues long: Putative glutamate--cysteine ligase 2 (398 aa).

This sequence belongs to the glutamate--cysteine ligase type 2 family. YbdK subfamily.

The enzyme catalyses L-cysteine + L-glutamate + ATP = gamma-L-glutamyl-L-cysteine + ADP + phosphate + H(+). ATP-dependent carboxylate-amine ligase which exhibits weak glutamate--cysteine ligase activity. In Micrococcus luteus (strain ATCC 4698 / DSM 20030 / JCM 1464 / CCM 169 / CCUG 5858 / IAM 1056 / NBRC 3333 / NCIMB 9278 / NCTC 2665 / VKM Ac-2230) (Micrococcus lysodeikticus), this protein is Putative glutamate--cysteine ligase 2.